Here is an 88-residue protein sequence, read N- to C-terminus: uncharacterized protein (88 aa).

A disordered region spans residues 1–54 (AVDAYDDDDNLKNEEGDYYNESDDGYSGDEEEEEKQEEDEQDDDDLQFDDGVPE). Residues 16 to 53 (GDYYNESDDGYSGDEEEEEKQEEDEQDDDDLQFDDGVP) are compositionally biased toward acidic residues.

Predominantly in developing fruit.

This is an uncharacterized protein from Fragaria ananassa (Strawberry).